Consider the following 283-residue polypeptide: Putative casein kinase II subunit beta-4 (283 aa).

Disordered stretches follow at residues 1–23 (MYKD…EILG) and 35–92 (LDKH…SEGD). Residues 7–16 (GGGIMGGGGS) are compositionally biased toward gly residues. The span at 58–70 (VPSTSTAKSQLHS) shows a compositional bias: polar residues.

It belongs to the casein kinase 2 subunit beta family. As to quaternary structure, heterotetramer of two catalytic alpha subunits and two regulatory beta subunits. In terms of processing, phosphorylated by alpha subunit.

The protein localises to the cytoplasm. Its subcellular location is the cytosol. Its function is as follows. Plays a complex role in regulating the basal catalytic activity of the alpha subunit. The tetrameric holoenzyme CK2, composed of two alpha and two beta subunits, phosphorylates the transcription factor PIF1 after an exposure to light, resulting in a proteasome-dependent degradation of PIF1 and promotion of photomorphogenesis. CK2 phosphorylates translation initiation factors. May participate in the regulation of the initiation of translation. In Arabidopsis thaliana (Mouse-ear cress), this protein is Putative casein kinase II subunit beta-4.